The sequence spans 729 residues: Serine/threonine-protein kinase TBK1 (729 aa).

In terms of domain architecture, Protein kinase spans 9-310 (WLLSDILGQG…ETSDVLHRMV (302 aa)). 15-23 (LGQGATANV) is a binding site for ATP. Residue Lys-30 forms a Glycyl lysine isopeptide (Lys-Gly) (interchain with G-Cter in ubiquitin) linkage. An ATP-binding site is contributed by Lys-38. The active-site Proton acceptor is Asp-135. Ser-172 bears the Phosphoserine; by autocatalysis and IKKB mark. The region spanning 309–385 (MVIHVFSLQH…ENPIFVTSRE (77 aa)) is the Ubiquitin-like domain. A Glycyl lysine isopeptide (Lys-Gly) (interchain with G-Cter in ubiquitin) cross-link involves residue Lys-401. 2 coiled-coil regions span residues 407 to 657 (DLDG…LQET) and 658 to 713 (LPQK…ILER). The interaction with AZI2, TANK and TBKBP1 stretch occupies residues 621 to 729 (RKMLHLRKQL…DGGLRNVDCL (109 aa)). Lys-670 participates in a covalent cross-link: Glycyl lysine isopeptide (Lys-Gly) (interchain with G-Cter in ubiquitin). Residue Ser-716 is modified to Phosphoserine.

The protein belongs to the protein kinase superfamily. Ser/Thr protein kinase family. I-kappa-B kinase subfamily. Homodimer. Interacts with DDX3X, TIRAP and TRAF2. Part of a ternary complex consisting of TANK, TRAF2 and TBK1. Interacts with AZI2, TANK and TBKBP1; these interactions are mutually exclusive and mediate TBK1 activation. Interacts with GSK3B; this interaction promotes TBK1 self-association and autophosphorylation. Interacts with SIKE1; SIKE1 is associated with TBK1 under physiological condition and dissociated from TBK1 upon viral infection or TLR3 stimulation. Interacts with IRF3, leading to IRF3 phosphorylation. Interacts with RIGI. Interacts with CYLD. Interacts with OPTN and TRAF3. Interacts with SRC. Interacts with the exocyst complex subunit SEC5/EXOC2; this interaction is sufficient to trigger TBK1 activity. Interacts with STING1, leading to STING1 phosphorylation. Interacts with IFIT3 (via N-terminus). Interacts with MAVS; interaction only takes place in the presence of IFIT3 and leads to MAVS phosphorylation. Interacts (via protein kinase domain) with TTLL12 (via TTL domain); the interaction prevents MAVS binding to TBK1. Interacts with TICAM1; this interaction is enhanced in the presence of WDFY1 and leads to TICAM1 phosphorylation. Interacts with TRIM26. Interacts with TRIM23. Interacts with TTC4 and IKBKE. Interacts with HNRNPA2B1. Interacts with DDX3X. Interacts with TRIM14. Interacts with CEP170; efficient complex formation may be dependent on the presence of CCDC61. Interacts with TRAF3IP3. Interacts with HSP90AA1; the interaction mediates TBK1 association with TOMM70. Interacts with TAX1BP1. Interacts with kinase IKBKB; the complex interacts with STAT1, leading to phosphorylation of STAT1 on 'Thr-748' by IKBKB. Interacts with ICOS; this interaction is critical for the maturation of T follicular regulatory cells. Interacts with RNF144B; this interaction prevents TBK1 phosphorylation and subsequent activation. Interacts with ASB8; this interaction promotes TBK1 proteasomal degradation. Autophosphorylation at Ser-172 activates the kinase, and is an essential step for virus-triggered signaling. Phosphorylated by IKBKB/IKKB at Ser-172. Phosphorylation requires homodimerization and ubiquitination at Lys-30 and Lys-401. Dephosphorylated at Ser-172 by PPM1B and this negatively regulates its role in mediating antiviral response. In terms of processing, 'Lys-63'-linked polyubiquitination by MIB1 after RNA virus infection, or by NRDP1 after LPS stimulation at Lys-30 and Lys-401, participates in kinase activation. 'Lys-48'-linked polyubiquitination at Lys-670 by DTX4 leads to proteasomal degradation. 'Lys-48'-linked polyubiquitination by TRAIP also leads to proteasomal degradation. 'Lys-48'-linked polyubiquitination by TRAF7; leading to proteasomal degradation. 'Lys-63'-linked polyubiquitination by RNF128 at Lys-30 and Lys-401 leads to the activation of antiviral responses. 'Lys-48'-linked polyubiquitination after 'lys-33'-linked deubiquitination by USP38 promotes TBK1 degradation.

It localises to the cytoplasm. It carries out the reaction L-seryl-[protein] + ATP = O-phospho-L-seryl-[protein] + ADP + H(+). It catalyses the reaction L-threonyl-[protein] + ATP = O-phospho-L-threonyl-[protein] + ADP + H(+). Kinase activity is inhibited competitively by amlexanox. Its function is as follows. Serine/threonine kinase that plays an essential role in regulating inflammatory responses to foreign agents. Following activation of toll-like receptors by viral or bacterial components, associates with TRAF3 and TANK and phosphorylates interferon regulatory factors (IRFs) IRF3 and IRF7 as well as DDX3X. This activity allows subsequent homodimerization and nuclear translocation of the IRFs leading to transcriptional activation of pro-inflammatory and antiviral genes including IFNA and IFNB. In order to establish such an antiviral state, TBK1 form several different complexes whose composition depends on the type of cell and cellular stimuli. Thus, several scaffolding molecules including FADD, TRADD, MAVS, AZI2, TANK or TBKBP1/SINTBAD can be recruited to the TBK1-containing-complexes. Plays a key role in IRF3 activation: acts by first phosphorylating innate adapter proteins MAVS, STING1 and TICAM1 on their pLxIS motif, leading to recruitment of IRF3, thereby licensing IRF3 for phosphorylation by TBK1. Under particular conditions, functions as a NF-kappa-B effector by phosphorylating NF-kappa-B inhibitor alpha/NFKBIA, IKBKB or RELA to translocate NF-Kappa-B to the nucleus. Restricts bacterial proliferation by phosphorylating the autophagy receptor OPTN/Optineurin on 'Ser-177', thus enhancing LC3 binding affinity and antibacterial autophagy. Phosphorylates SMCR8 component of the C9orf72-SMCR8 complex, promoting autophagosome maturation. Phosphorylates ATG8 proteins MAP1LC3C and GABARAPL2, thereby preventing their delipidation and premature removal from nascent autophagosomes. Seems to play a role in energy balance regulation by sustaining a state of chronic, low-grade inflammation in obesity, which leads to a negative impact on insulin sensitivity. Acts both as a positive and negative regulator of the mTORC1 complex, depending on the context: activates mTORC1 in response to growth factors by catalyzing phosphorylation of MTOR, while it limits the mTORC1 complex by promoting phosphorylation of RPTOR. Acts as a positive regulator of the mTORC2 complex by mediating phosphorylation of MTOR, leading to increased phosphorylation and activation of AKT1. Phosphorylates and activates AKT1. Involved in the regulation of TNF-induced RIPK1-mediated cell death, probably acting via CYLD phosphorylation that in turn controls RIPK1 ubiquitination status. Also participates in the differentiation of T follicular regulatory cells together with the receptor ICOS. The polypeptide is Serine/threonine-protein kinase TBK1 (Mus musculus (Mouse)).